The following is a 255-amino-acid chain: FMR1 neighbor protein (255 aa).

The Cytoplasmic portion of the chain corresponds to 1 to 68; it reads MSSHRRKAKG…ESLKMRVSKP (68 aa). A helical membrane pass occupies residues 69-89; sequence FGMLMLSIWILLFVCYYLSYY. Residues 90–183 are Extracellular-facing; it reads LCSGSSYFVL…FAPFRDVPKQ (94 aa). A P-type domain is found at 125–184; that stretch reads LLNFFFPTTCNLRENQVAKPCNELQDLSESECLRHKCCFSSSGTTSFKCFAPFRDVPKQM. A helical membrane pass occupies residues 184–204; that stretch reads MMQMFGLGAISLILVCLPIYC. Topologically, residues 205–255 are cytoplasmic; that stretch reads RSLFWRSEPADDLQRQDNRVVTGLKKQRRKRKRKSEMLQKAARGREEHGDE. The disordered stretch occupies residues 220-255; that stretch reads QDNRVVTGLKKQRRKRKRKSEMLQKAARGREEHGDE. Over residues 229 to 238 the composition is skewed to basic residues; sequence KKQRRKRKRK.

As to expression, testis-specific. Expressed in melanoma, sarcoma, lung, breast, bladder, esophageal and ovarian cancers.

The protein localises to the membrane. In Homo sapiens (Human), this protein is FMR1 neighbor protein.